We begin with the raw amino-acid sequence, 703 residues long: WD repeat-containing protein pop2 (703 aa).

Composition is skewed to polar residues over residues 1 to 27, 63 to 73, and 156 to 178; these read MSLSRCPTDNSSSRINSSVPLINSSSP, ESNSCNGNTSS, and SISSNSDNFPPSPKVDTSNTVSP. 2 disordered regions span residues 1-73 and 156-180; these read MSLS…NTSS and SISSNSDNFPPSPKVDTSNTVSPGS. The interval 1–170 is interaction with pop1; it reads MSLSRCPTDN…SDNFPPSPKV (170 aa). The 48-residue stretch at 236 to 283 folds into the F-box domain; sequence KDILSNLPFSIVQSILLNLDIHSFLSCRLVSPTWNRILDVHTSYWKHM. WD repeat units follow at residues 389 to 417, 429 to 473, 505 to 533, 545 to 575, 587 to 615, and 625 to 654; these read GHKEGVWAVKIHENTLVSGSIDKTVRVWN, GHIS…RVWK, GHTDSVRTISGYGDILVSGSYDSSIRIWR, GHSLRIYSVLYEPERNICISGSMDKSIRVWD, GHDAFVTLLNVFQNRLISGSADSTIRIWD, and LPSNSGYISSFVSDEHKIISGNDGSVKLWD.

Homodimer and heterodimer with pop1. Binds to cul1, pip1 and phosphorylated cdc18.

It localises to the cytoplasm. Its subcellular location is the nucleus. Its function is as follows. Involved in maintenance of ploidy through proteasome dependent degradation of CDK inhibitor rum1 and S-phase initiator cdc18. Functions as a recognition factor for rum1 and cdc18, which are subsequently ubiquitinated and targeted to the 26S proteasome for degradation. Together with pop1, required for cig2 instability during G2 and M phase and cig2 degradation in exponentially growing cells. The sequence is that of WD repeat-containing protein pop2 (pop2) from Schizosaccharomyces pombe (strain 972 / ATCC 24843) (Fission yeast).